Consider the following 86-residue polypeptide: Large ribosomal subunit protein bL31B (86 aa).

Belongs to the bacterial ribosomal protein bL31 family. Type B subfamily. As to quaternary structure, part of the 50S ribosomal subunit.

In Yersinia enterocolitica serotype O:8 / biotype 1B (strain NCTC 13174 / 8081), this protein is Large ribosomal subunit protein bL31B.